We begin with the raw amino-acid sequence, 160 residues long: Transcriptional regulator MraZ (160 aa).

SpoVT-AbrB domains lie at 5–50 (KFET…EGVY) and 93–136 (AIEC…SQAE).

Belongs to the MraZ family. Forms oligomers.

Its subcellular location is the cytoplasm. It localises to the nucleoid. This chain is Transcriptional regulator MraZ, found in Geotalea uraniireducens (strain Rf4) (Geobacter uraniireducens).